The following is a 250-amino-acid chain: Ubiquinone/menaquinone biosynthesis C-methyltransferase UbiE (250 aa).

S-adenosyl-L-methionine contacts are provided by residues Thr74, Asp94, 122 to 123, and Ser139; that span reads DA.

This sequence belongs to the class I-like SAM-binding methyltransferase superfamily. MenG/UbiE family.

It carries out the reaction a 2-demethylmenaquinol + S-adenosyl-L-methionine = a menaquinol + S-adenosyl-L-homocysteine + H(+). The enzyme catalyses a 2-methoxy-6-(all-trans-polyprenyl)benzene-1,4-diol + S-adenosyl-L-methionine = a 5-methoxy-2-methyl-3-(all-trans-polyprenyl)benzene-1,4-diol + S-adenosyl-L-homocysteine + H(+). It functions in the pathway quinol/quinone metabolism; menaquinone biosynthesis; menaquinol from 1,4-dihydroxy-2-naphthoate: step 2/2. It participates in cofactor biosynthesis; ubiquinone biosynthesis. Methyltransferase required for the conversion of demethylmenaquinol (DMKH2) to menaquinol (MKH2) and the conversion of 2-polyprenyl-6-methoxy-1,4-benzoquinol (DDMQH2) to 2-polyprenyl-3-methyl-6-methoxy-1,4-benzoquinol (DMQH2). This Dinoroseobacter shibae (strain DSM 16493 / NCIMB 14021 / DFL 12) protein is Ubiquinone/menaquinone biosynthesis C-methyltransferase UbiE.